A 363-amino-acid polypeptide reads, in one-letter code: 3-ketodihydrosphingosine reductase TSC10 (363 aa).

NADP(+) is bound at residue Leu10. Residues Gly13, Ser15, and Gly17 each contribute to the NADPH site. The GXSXG signature appears at 13 to 17 (GGSQG). Residue Leu18 participates in NADP(+) binding. Positions 40, 44, 131, and 132 each coordinate NADPH. An NADP(+)-binding site is contributed by Asp131. The Proton donor role is filled by Ser206. Tyr220, Lys224, and Ser253 together coordinate NADP(+). The Proton acceptor role is filled by Tyr220. Lys224 acts as the Lowers pKa of active site Tyr in catalysis. A helical membrane pass occupies residues 324 to 344 (FVQWLIGVIANLLVVPFYMVL).

The protein belongs to the short-chain dehydrogenases/reductases (SDR) family.

It is found in the endoplasmic reticulum membrane. The catalysed reaction is sphinganine + NADP(+) = 3-oxosphinganine + NADPH + H(+). The protein operates within lipid metabolism; sphingolipid metabolism. Functionally, catalyzes the reduction of 3'-oxosphinganine (3-ketodihydrosphingosine/KDS) to sphinganine (dihydrosphingosine/DHS), the second step of de novo sphingolipid biosynthesis. This is 3-ketodihydrosphingosine reductase TSC10 (TSC10) from Candida glabrata (strain ATCC 2001 / BCRC 20586 / JCM 3761 / NBRC 0622 / NRRL Y-65 / CBS 138) (Yeast).